A 282-amino-acid chain; its full sequence is Hydrogenase expression/formation protein HoxQ (282 aa).

The protein belongs to the HupH/HyaF family.

In Cupriavidus necator (strain ATCC 17699 / DSM 428 / KCTC 22496 / NCIMB 10442 / H16 / Stanier 337) (Ralstonia eutropha), this protein is Hydrogenase expression/formation protein HoxQ (hoxQ).